A 277-amino-acid polypeptide reads, in one-letter code: Putative envelope-preserving system protein Rv2742c (277 aa).

Basic and acidic residues predominate over residues 31–54 (RDENRQRHAQVDVQRRRDQPERGQ). Disordered stretches follow at residues 31 to 70 (RDEN…PDGR), 113 to 133 (QGSP…RLGR), and 180 to 210 (RQGS…HTAD). Residues 116–133 (PRRRERRRGQTAHQRLGR) are compositionally biased toward basic residues.

Interacts with Rv2743c.

In terms of biological role, involved in preservation of envelope integrity and tolerance to surface stress. Reverses the inhibitory effect of PspA on ClgR activity. Facilitates intracellular growth of M.tuberculosis. The protein is Putative envelope-preserving system protein Rv2742c of Mycobacterium tuberculosis (strain ATCC 25618 / H37Rv).